A 210-amino-acid chain; its full sequence is Redox-sensing transcriptional repressor Rex (210 aa).

Residues 15–54 (LYYRIFKRFNTDGIEKASSKQIADALGIDSATVRRDFSYF) constitute a DNA-binding region (H-T-H motif). 89–94 (GCGNIG) contacts NAD(+).

It belongs to the transcriptional regulatory Rex family. As to quaternary structure, homodimer.

Its subcellular location is the cytoplasm. Modulates transcription in response to changes in cellular NADH/NAD(+) redox state. The chain is Redox-sensing transcriptional repressor Rex from Streptococcus agalactiae serotype Ia (strain ATCC 27591 / A909 / CDC SS700).